The following is a 1775-amino-acid chain: Atrochrysone carboxylic acid synthase (1775 aa).

Positions 29–258 (RSQSKTESGW…QLPVYGGLCH (230 aa)) are N-terminal acylcarrier protein transacylase domain (SAT). The 431-residue stretch at 391–821 (DSSIAIVGMA…GGNTSLLIEE (431 aa)) folds into the Ketosynthase family 3 (KS3) domain. Catalysis depends on for beta-ketoacyl synthase activity residues Cys564, His699, and His740. The malonyl-CoA:ACP transacylase (MAT) domain stretch occupies residues 921 to 1241 (FVFSGQGSFY…MAQLHNLGVD (321 aa)). Residues 1305–1626 (TSLVHRLVCE…RSLINTFFSP (322 aa)) are product template (PT) domain. The tract at residues 1309-1455 (HRLVCESVQE…WLEEWSPMTH (147 aa)) is N-terminal hotdog fold. The PKS/mFAS DH domain maps to 1309-1621 (HRLVCESVQE…FRTFPRSLIN (313 aa)). The active-site Proton acceptor; for dehydratase activity is His1341. Residues 1472–1621 (TANRLSRDMV…FRTFPRSLIN (150 aa)) are C-terminal hotdog fold. Asp1532 functions as the Proton donor; for dehydratase activity in the catalytic mechanism. The segment at 1672 to 1694 (SRTVMDSSDSSPATTLTPPTLPS) is disordered. Over residues 1677–1689 (DSSDSSPATTLTP) the composition is skewed to low complexity. Residues 1698 to 1775 (STESPIVHRA…DLKAWLIDYC (78 aa)) form the Carrier domain. Residue Ser1735 is modified to O-(pantetheine 4'-phosphoryl)serine.

In terms of tissue distribution, endocrocin is specifically produced in conidia.

It carries out the reaction holo-[ACP] + 8 malonyl-CoA + 8 H(+) = atrochrysone carboxyl-[ACP] + 8 CO2 + 8 CoA + 2 H2O. It functions in the pathway secondary metabolite biosynthesis. Functionally, non-reducing polyketide synthase; part of the gene cluster that mediates the biosynthesis of endocrocin, a simple anthraquinone interesting for many biotechnological applications. The pathway begins with the synthesis of atrochrysone thioester by the polyketide synthase (PKS) encA. The atrochrysone carboxyl ACP thioesterase encB then breaks the thioester bond and releases the atrochrysone carboxylic acid from encA. The atrochrysone carboxylic acid is then converted to endocrocin anthrone which is further oxidized into endocrocin by the anthrone oxygenase encC. The exact function of encD has not been identified yet, but it negatively regulates endocrocin production, likely through the modification of endocrocin itself. The polypeptide is Atrochrysone carboxylic acid synthase (Aspergillus fumigatus (strain ATCC MYA-4609 / CBS 101355 / FGSC A1100 / Af293) (Neosartorya fumigata)).